We begin with the raw amino-acid sequence, 253 residues long: Major prion protein (253 aa).

The signal sequence occupies residues 1 to 22 (MANLGCWMLVLFVATWSDLGLC). The segment at 23–230 (KKRPKPGGWN…ESQAYYQRGS (208 aa)) is interaction with GRB2, ERI3 and SYN1. The interval 26–108 (PKPGGWNTGG…WNKPSKPKTN (83 aa)) is disordered. 5 tandem repeats follow at residues 51–59 (PQGGGGWGQ), 60–67 (PHGGGWGQ), 68–75 (PHGGGWGQ), 76–83 (PHGGGWGQ), and 84–91 (PHGGGWGQ). Positions 51–91 (PQGGGGWGQPHGGGWGQPHGGGWGQPHGGGWGQPHGGGWGQ) are 5 X 8 AA tandem repeats of P-H-G-G-G-W-G-Q. The span at 52 to 95 (QGGGGWGQPHGGGWGQPHGGGWGQPHGGGWGQPHGGGWGQGGGT) shows a compositional bias: gly residues. Positions 61, 62, 63, 69, 70, 71, 77, 78, 79, 85, 86, and 87 each coordinate Cu(2+). A disulfide bridge links C179 with C214. Residues N181 and N197 are each glycosylated (N-linked (GlcNAc...) asparagine). S230 carries GPI-anchor amidated serine lipidation. The propeptide at 231–253 (SMVLFSSPPVILLISFLIFLIVG) is removed in mature form.

The protein belongs to the prion family. As to quaternary structure, monomer and homodimer. Has a tendency to aggregate into amyloid fibrils containing a cross-beta spine, formed by a steric zipper of superposed beta-strands. Soluble oligomers may represent an intermediate stage on the path to fibril formation. Copper binding may promote oligomerization. Interacts with GRB2, APP, ERI3/PRNPIP and SYN1. Mislocalized cytosolically exposed PrP interacts with MGRN1; this interaction alters MGRN1 subcellular location and causes lysosomal enlargement. Interacts with KIAA1191.

Its subcellular location is the cell membrane. It is found in the golgi apparatus. Functionally, its primary physiological function is unclear. Has cytoprotective activity against internal or environmental stresses. May play a role in neuronal development and synaptic plasticity. May be required for neuronal myelin sheath maintenance. May play a role in iron uptake and iron homeostasis. Soluble oligomers are toxic to cultured neuroblastoma cells and induce apoptosis (in vitro). Association with GPC1 (via its heparan sulfate chains) targets PRNP to lipid rafts. Also provides Cu(2+) or Zn(2+) for the ascorbate-mediated GPC1 deaminase degradation of its heparan sulfate side chains. This is Major prion protein (PRNP) from Hylobates lar (Lar gibbon).